The chain runs to 625 residues: Glutamine--fructose-6-phosphate aminotransferase [isomerizing] (625 aa).

Residue Cys2 is the Nucleophile; for GATase activity of the active site. Residues 2–229 (CGIVGFVGRT…NDQIVTITAD (228 aa)) form the Glutamine amidotransferase type-2 domain. SIS domains are found at residues 296 to 436 (IDES…LRGN) and 470 to 615 (LAQD…VDQP). Lys620 functions as the For Fru-6P isomerization activity in the catalytic mechanism.

Homodimer.

Its subcellular location is the cytoplasm. It catalyses the reaction D-fructose 6-phosphate + L-glutamine = D-glucosamine 6-phosphate + L-glutamate. In terms of biological role, catalyzes the first step in hexosamine metabolism, converting fructose-6P into glucosamine-6P using glutamine as a nitrogen source. The chain is Glutamine--fructose-6-phosphate aminotransferase [isomerizing] from Corynebacterium diphtheriae (strain ATCC 700971 / NCTC 13129 / Biotype gravis).